The following is a 264-amino-acid chain: Ribosomal protein L11 methyltransferase (264 aa).

Residues Thr116, Gly137, Asp159, and Asn200 each contribute to the S-adenosyl-L-methionine site.

It belongs to the methyltransferase superfamily. PrmA family.

The protein localises to the cytoplasm. The enzyme catalyses L-lysyl-[protein] + 3 S-adenosyl-L-methionine = N(6),N(6),N(6)-trimethyl-L-lysyl-[protein] + 3 S-adenosyl-L-homocysteine + 3 H(+). In terms of biological role, methylates ribosomal protein L11. The polypeptide is Ribosomal protein L11 methyltransferase (Thermotoga petrophila (strain ATCC BAA-488 / DSM 13995 / JCM 10881 / RKU-1)).